Here is an 836-residue protein sequence, read N- to C-terminus: Protein-glutamine gamma-glutamyltransferase K (836 aa).

Residues 1–33 (MDGPRSDMGRSDVSRSDMSRSDMGRSDMGRSDV) are compositionally biased toward basic and acidic residues. Disordered regions lie at residues 1–68 (MDGP…SRGG) and 89–125 (DDWGREPSDSRDRGSSSRGGRPDSRGGGVNAAGDGTI). Thr-46 is modified (phosphothreonine). 3 positions are modified to phosphoserine: Ser-48, Ser-98, and Ser-112. Over residues 89–112 (DDWGREPSDSRDRGSSSRGGRPDS) the composition is skewed to basic and acidic residues. Residues Cys-397, His-456, and Asp-479 contribute to the active site. 4 residues coordinate Ca(2+): Asn-519, Asp-521, Glu-568, and Glu-573. At Ser-824 the chain carries Phosphoserine.

The protein belongs to the transglutaminase superfamily. Transglutaminase family. As to quaternary structure, interacts with PLAAT4. The cofactor is Ca(2+). Post-translationally, palmitoylated. In terms of processing, the membrane anchorage region possesses a cluster of five cysteines within which fatty acid(s) may become thioester-linked. It is subject to phorbol ester-stimulated phosphorylation and is hypersensitive to proteolysis, which releases the enzyme in a soluble form. Tyrosine-phosphorylated.

The protein localises to the membrane. It carries out the reaction L-glutaminyl-[protein] + L-lysyl-[protein] = [protein]-L-lysyl-N(6)-5-L-glutamyl-[protein] + NH4(+). Inhibited by retinoic acid, but phorbol ester treatment activates it. Functionally, catalyzes the cross-linking of proteins and the conjugation of polyamines to proteins. Responsible for cross-linking epidermal proteins during formation of the stratum corneum. Involved in cell proliferation. The polypeptide is Protein-glutamine gamma-glutamyltransferase K (TGM1) (Oryctolagus cuniculus (Rabbit)).